The sequence spans 839 residues: ABC transporter A family member 7 (839 aa).

The next 7 membrane-spanning stretches (helical) occupy residues 30–50 (GVQI…KLWI), 238–258 (IASL…LPLF), 286–306 (IMTF…ISLI), 321–341 (FALF…AFFL), 352–372 (SIFG…LSLF), 378–398 (VFYY…LCGL), and 419–439 (ILFW…YLDK). An ABC transporter domain is found at 525–756 (LIVQGLRKQF…FGDGYSVRID (232 aa)). 559 to 566 (GPNGAGKT) contributes to the ATP binding site.

The protein belongs to the ABC transporter superfamily. ABCA family.

The protein localises to the membrane. This Dictyostelium discoideum (Social amoeba) protein is ABC transporter A family member 7 (abcA7).